The primary structure comprises 149 residues: Large ribosomal subunit protein uL15 (149 aa).

Residues 14-57 (KQRKRVGRGSGSGWGCTSGKGNKGQNARSGGGVRPGFEGGQMPL) are disordered. Composition is skewed to gly residues over residues 21 to 35 (RGSG…GKGN) and 42 to 52 (SGGGVRPGFEG).

Belongs to the universal ribosomal protein uL15 family. Part of the 50S ribosomal subunit.

In terms of biological role, binds to the 23S rRNA. The polypeptide is Large ribosomal subunit protein uL15 (Oleidesulfovibrio alaskensis (strain ATCC BAA-1058 / DSM 17464 / G20) (Desulfovibrio alaskensis)).